The sequence spans 346 residues: UDP-3-O-acylglucosamine N-acyltransferase (346 aa).

The active-site Proton acceptor is histidine 253.

This sequence belongs to the transferase hexapeptide repeat family. LpxD subfamily. As to quaternary structure, homotrimer.

The catalysed reaction is a UDP-3-O-[(3R)-3-hydroxyacyl]-alpha-D-glucosamine + a (3R)-hydroxyacyl-[ACP] = a UDP-2-N,3-O-bis[(3R)-3-hydroxyacyl]-alpha-D-glucosamine + holo-[ACP] + H(+). It participates in bacterial outer membrane biogenesis; LPS lipid A biosynthesis. In terms of biological role, catalyzes the N-acylation of UDP-3-O-acylglucosamine using 3-hydroxyacyl-ACP as the acyl donor. Is involved in the biosynthesis of lipid A, a phosphorylated glycolipid that anchors the lipopolysaccharide to the outer membrane of the cell. The chain is UDP-3-O-acylglucosamine N-acyltransferase from Rickettsia prowazekii (strain Madrid E).